Here is a 554-residue protein sequence, read N- to C-terminus: Glucose-6-phosphate isomerase (554 aa).

Glu-359 serves as the catalytic Proton donor. Active-site residues include His-390 and Lys-518.

Belongs to the GPI family.

Its subcellular location is the cytoplasm. It carries out the reaction alpha-D-glucose 6-phosphate = beta-D-fructose 6-phosphate. It participates in carbohydrate biosynthesis; gluconeogenesis. It functions in the pathway carbohydrate degradation; glycolysis; D-glyceraldehyde 3-phosphate and glycerone phosphate from D-glucose: step 2/4. In terms of biological role, catalyzes the reversible isomerization of glucose-6-phosphate to fructose-6-phosphate. This is Glucose-6-phosphate isomerase from Pseudomonas syringae pv. tomato (strain ATCC BAA-871 / DC3000).